The following is a 616-amino-acid chain: Chaperone protein HscA homolog (616 aa).

The protein belongs to the heat shock protein 70 family.

Functionally, chaperone involved in the maturation of iron-sulfur cluster-containing proteins. Has a low intrinsic ATPase activity which is markedly stimulated by HscB. This Histophilus somni (strain 2336) (Haemophilus somnus) protein is Chaperone protein HscA homolog.